The primary structure comprises 208 residues: 3-isopropylmalate dehydratase small subunit (208 aa).

It belongs to the LeuD family. LeuD type 1 subfamily. As to quaternary structure, heterodimer of LeuC and LeuD.

It carries out the reaction (2R,3S)-3-isopropylmalate = (2S)-2-isopropylmalate. The protein operates within amino-acid biosynthesis; L-leucine biosynthesis; L-leucine from 3-methyl-2-oxobutanoate: step 2/4. In terms of biological role, catalyzes the isomerization between 2-isopropylmalate and 3-isopropylmalate, via the formation of 2-isopropylmaleate. This is 3-isopropylmalate dehydratase small subunit from Gluconobacter oxydans (strain 621H) (Gluconobacter suboxydans).